The sequence spans 512 residues: D-alanine--D-alanyl carrier protein ligase (512 aa).

152–153 (TS) provides a ligand contact to ATP. D199 lines the D-alanine pocket. 294-299 (NAYGPT) is a binding site for ATP. V303 lines the D-alanine pocket. ATP contacts are provided by residues D385, 397-400 (YGGR), and K499. K499 lines the D-alanine pocket.

The protein belongs to the ATP-dependent AMP-binding enzyme family. DltA subfamily.

The protein localises to the cytoplasm. It catalyses the reaction holo-[D-alanyl-carrier protein] + D-alanine + ATP = D-alanyl-[D-alanyl-carrier protein] + AMP + diphosphate. It functions in the pathway cell wall biogenesis; lipoteichoic acid biosynthesis. Functionally, catalyzes the first step in the D-alanylation of lipoteichoic acid (LTA), the activation of D-alanine and its transfer onto the D-alanyl carrier protein (Dcp) DltC. In an ATP-dependent two-step reaction, forms a high energy D-alanyl-AMP intermediate, followed by transfer of the D-alanyl residue as a thiol ester to the phosphopantheinyl prosthetic group of the Dcp. D-alanylation of LTA plays an important role in modulating the properties of the cell wall in Gram-positive bacteria, influencing the net charge of the cell wall. This is D-alanine--D-alanyl carrier protein ligase from Streptococcus pyogenes serotype M4 (strain MGAS10750).